A 166-amino-acid chain; its full sequence is MAFIDPAQLDLEDRVVAINRITKVVKGGRRLRFAALVVVGDHNGHVGFGTGKAQEVPEAIRKAVDAARKNLIEVPTVGTTLPHEVIGQYSGSRIMLKPAIAGSGVAAGGAVRAVMELAGIADVTSKSLGSNTPVNVVRATFDGLVNMKDAESVAKLRGVSVQHLAE.

The S5 DRBM domain maps to 11 to 74; the sequence is LEDRVVAINR…DAARKNLIEV (64 aa).

The protein belongs to the universal ribosomal protein uS5 family. Part of the 30S ribosomal subunit. Contacts proteins S4 and S8.

Its function is as follows. With S4 and S12 plays an important role in translational accuracy. In terms of biological role, located at the back of the 30S subunit body where it stabilizes the conformation of the head with respect to the body. In Ligilactobacillus salivarius (strain UCC118) (Lactobacillus salivarius), this protein is Small ribosomal subunit protein uS5.